The chain runs to 239 residues: Heptaprenylglyceryl phosphate synthase (239 aa).

Residue Lys12 participates in sn-glycerol 1-phosphate binding. Asp14 and Thr40 together coordinate Mg(2+). Sn-glycerol 1-phosphate is bound by residues 159-164 (YLEYSG), Gly189, and 209-210 (GN).

This sequence belongs to the GGGP/HepGP synthase family. Group I subfamily. As to quaternary structure, homodimer. Mg(2+) serves as cofactor.

It carries out the reaction sn-glycerol 1-phosphate + all-trans-heptaprenyl diphosphate = 3-heptaprenyl-sn-glycero-1-phosphate + diphosphate. The protein operates within membrane lipid metabolism; glycerophospholipid metabolism. Functionally, prenyltransferase that catalyzes in vivo the transfer of the heptaprenyl moiety of heptaprenyl pyrophosphate (HepPP; 35 carbon atoms) to the C3 hydroxyl of sn-glycerol-1-phosphate (G1P), producing heptaprenylglyceryl phosphate (HepGP). This reaction is an ether-bond-formation step in the biosynthesis of archaea-type G1P-based membrane lipids found in Bacillales. This chain is Heptaprenylglyceryl phosphate synthase, found in Geobacillus thermodenitrificans (strain NG80-2).